The sequence spans 443 residues: UDP-glucuronic acid decarboxylase 4 (443 aa).

An N-acetylalanine modification is found at alanine 2. Topologically, residues 2–43 (ASELTNRRHEIEQPEAESYYPKPIKPWFVAIRPIRYMLREQR) are cytoplasmic. A helical; Signal-anchor for type II membrane protein membrane pass occupies residues 44-64 (LVFVLVGIAIATLGFTIFSKS). Topologically, residues 65 to 443 (SNHQPIPYDV…DSSTTSSSTE (379 aa)) are lumenal. Residue 151 to 176 (DNFFTGRKENVMHHFNNPNFEMIRHD) participates in NAD(+) binding. A substrate-binding site is contributed by arginine 260. Residue tyrosine 263 is the Proton acceptor of the active site. Position 263 to 267 (263 to 267 (YDEGK)) interacts with NAD(+). Substrate is bound at residue asparagine 292. Position 304 (arginine 304) interacts with NAD(+). Residues 305–309 (VVSNF), 322–329 (YGDGKQTR), and 389–393 (DPHKR) each bind substrate.

It belongs to the NAD(P)-dependent epimerase/dehydratase family. UDP-glucuronic acid decarboxylase subfamily. Requires NAD(+) as cofactor.

It localises to the golgi apparatus. The protein resides in the golgi stack membrane. It carries out the reaction UDP-alpha-D-glucuronate + H(+) = UDP-alpha-D-xylose + CO2. It functions in the pathway nucleotide-sugar biosynthesis; UDP-alpha-D-xylose biosynthesis; UDP-alpha-D-xylose from UDP-alpha-D-glucuronate: step 1/1. Functionally, catalyzes the NAD-dependent decarboxylation of UDP-glucuronic acid to UDP-xylose. Necessary for the biosynthesis of the core tetrasaccharide in glycosaminoglycan biosynthesis. The sequence is that of UDP-glucuronic acid decarboxylase 4 (UXS4) from Arabidopsis thaliana (Mouse-ear cress).